The primary structure comprises 493 residues: GPI alpha-1,6-mannosyltransferase 2 (493 aa).

Topologically, residues 1–13 (MGLLDPSQKEVLR) are cytoplasmic. The chain crosses the membrane as a helical span at residues 14–34 (FAVNCRILTLVLQALFNLIIP). Topologically, residues 35-77 (DHHADAFCPPRLAPSGSADQLVEGLLGGLSRWDAEHFLFIAEH) are lumenal. A helical membrane pass occupies residues 78–98 (GYLYEHNFAFFPGFPLALLMG). The Cytoplasmic portion of the chain corresponds to 99–113 (TELLRPLQGLLSQRS). The helical transmembrane segment at 114-134 (CLLVSVALLNLLFSVLAAVAL) threads the bilayer. The Lumenal portion of the chain corresponds to 135-136 (HD). Residues 137–157 (LGCLVLHCPRQALCAALLFCI) form a helical membrane-spanning segment. Residues 158–161 (SPAN) lie on the Cytoplasmic side of the membrane. A helical transmembrane segment spans residues 162-182 (VFLAAGYSEALFAFLTFSAMG). Over 183–192 (QLERGRGWAS) the chain is Lumenal. Residues 193-213 (GLLFALAAGVRSNGLVSLGFL) form a helical membrane-spanning segment. The Cytoplasmic segment spans residues 214-234 (LHSQCRGFCSSLAVLSPWKPL). Residues 235–255 (VKLMASVCLSVLIVSLPFALF) traverse the membrane as a helical segment. Residues 256-327 (QYRAYIQFCS…RYYELKQVPN (72 aa)) are Lumenal-facing. Residues 328–348 (FLLATPVTVLVVWATWTYVTT) form a helical membrane-spanning segment. Over 349–378 (HPWLCLTLGLQRTKDRENPEKPHRGFLSPK) the chain is Cytoplasmic. The chain crosses the membrane as a helical span at residues 379-399 (VFVYLVHAAALLVFGGLCMHV). The Lumenal portion of the chain corresponds to 400–469 (QVLTRFLASS…DWKRCSPVTR (70 aa)). The chain crosses the membrane as a helical span at residues 470-490 (CVLVYFLTYWLLGLILHCNFL). Over 491–493 (PWT) the chain is Cytoplasmic.

This sequence belongs to the PIGV family. Post-translationally, not N-glycosylated.

It localises to the endoplasmic reticulum membrane. Its pathway is glycolipid biosynthesis; glycosylphosphatidylinositol-anchor biosynthesis. Its function is as follows. Alpha-1,6-mannosyltransferase that catalyzes the transfer of the second mannose, via an alpha-1,6 bond, from a dolichol-phosphate-mannose (Dol-P-Man) to the alpha-D-Man-(1-&gt;4)-alpha-D-GlcN-(1-&gt;6)-(1-radyl,2-acyl-sn-glycero-3-phospho)-2-acyl-inositol (also termed H2) intermediate to generate an alpha-D-Man-(1-&gt;6)-alpha-D-Man-(1-&gt;4)-alpha-D-GlcN-(1-&gt;6)-(1-radyl,2-acyl-sn-glycero-3-phospho)-2-acyl-inositol (also termed H3) and participates in the seventh step of the glycosylphosphatidylinositol-anchor biosynthesis. Also transfers the second mannose on a 2-PEtn-alpha-D-Man-(1-&gt;4)-alpha-D-GlcN-(1-&gt;6)-(1-radyl,2-acyl-sn-glycero-3-phospho)-2-acyl-inositol (also termed H5). The sequence is that of GPI alpha-1,6-mannosyltransferase 2 from Mus musculus (Mouse).